The following is a 56-amino-acid chain: Protein translocase subunit SecE (56 aa).

Residues 30-50 (VFWLVLFVSIFLGIVDYLMFL) form a helical membrane-spanning segment.

It belongs to the SecE/SEC61-gamma family. As to quaternary structure, component of the Sec protein translocase complex. Heterotrimer consisting of SecY, SecE and SecG subunits. The heterotrimers can form oligomers, although 1 heterotrimer is thought to be able to translocate proteins. Interacts with the ribosome. Interacts with SecDF, and other proteins may be involved. Interacts with SecA.

The protein localises to the cell inner membrane. In terms of biological role, essential subunit of the Sec protein translocation channel SecYEG. Clamps together the 2 halves of SecY. May contact the channel plug during translocation. This Borreliella burgdorferi (strain ATCC 35210 / DSM 4680 / CIP 102532 / B31) (Borrelia burgdorferi) protein is Protein translocase subunit SecE.